A 579-amino-acid polypeptide reads, in one-letter code: MLSCDICGETVSSEPDMKAHLLIVHMENEVICPFCKLSGVNYDEMCFHIETAHFEQNELERNFERINTVQYGISDNRKDSSLQCRADINSSVHSACASNQPKISAQSLPKDGTLKHKDFYSENLTESRKFLKSTEKQSDRTKIKESIYETMYSPPECPFCGKIEDNSQDMETHVKTKHADLLDTPLEDCNQLLYDCPMCGLVCTNYHILQEHVDLHLEESSFGQGVNRVQCSRDLELAQQLQQEEDRKRRSEESRQEMEEFQKLQRQYGLDNSGGYKQQQLRNMEIEVNRGRMHPSEFHRRKADMMESLAIGVDDGKTKTSGIMEALYRYYQNAATDVRRVWLSAGVDHFHSSFGDKGWGCGYRNFQMLLSSLLQNDAYDDSLKGMSVPCIPKIQSMIEDAWKEGFDPQGASQLNDKLQGTKAWIGACEIYTLLTSLRIKCRIVDFHKSTGPLGTHPRLFEWILSYYASEREGSPKVVCTSKPPIYLQHQGHSRTVVGIEEKKNRTLCLLVFDPGCPSREMQKLLKHDMEVSSLKQLRKFVGNLKHKQYQIVAVEGVLSSEEKIARRQASQVFTAEKIP.

The C2H2-type 1 zinc finger occupies 2–25; that stretch reads LSCDICGETVSSEPDMKAHLLIVH. A C2H2-type 2; atypical zinc finger spans residues 30 to 53; that stretch reads VICPFCKLSGVNYDEMCFHIETAH. C2H2-type zinc fingers lie at residues 155–178 and 194–216; these read PECP…KTKH and YDCP…VDLH. Residues 227 to 249 form an MIU region; the sequence is NRVQCSRDLELAQQLQQEEDRKR. Residues 250–275 are zUBD/ZHA; the sequence is RSEESRQEMEEFQKLQRQYGLDNSGG. Lys-263 is subject to N6-acetyllysine. Cys-361 functions as the Nucleophile in the catalytic mechanism. The active-site Proton acceptor is His-492. Residue Asp-513 is part of the active site.

This sequence belongs to the peptidase C78 family. ZUFSP subfamily. As to quaternary structure, interacts with RPA1 and RPA2.

It is found in the cytoplasm. The protein localises to the nucleus. It carries out the reaction Thiol-dependent hydrolysis of ester, thioester, amide, peptide and isopeptide bonds formed by the C-terminal Gly of ubiquitin (a 76-residue protein attached to proteins as an intracellular targeting signal).. Its function is as follows. Deubiquitinase with endodeubiquitinase activity that specifically interacts with and cleaves 'Lys-63'-linked long polyubiquitin chains. Shows only weak activity against 'Lys-11' and 'Lys-48'-linked chains. Plays an important role in genome stability pathways, functioning to prevent spontaneous DNA damage and also promote cellular survival in response to exogenous DNA damage. Modulates the ubiquitination status of replication protein A (RPA) complex proteins in response to replication stress. The protein is Zinc finger-containing ubiquitin peptidase 1 of Bos taurus (Bovine).